A 645-amino-acid chain; its full sequence is Pro-neuregulin-1, membrane-bound isoform (645 aa).

Residues 1–19 (MSERKEGRGKGKGKKKDRG) constitute a propeptide that is removed on maturation. The tract at residues 1 to 52 (MSERKEGRGKGKGKKKDRGSRGKPAPAEGDPSPALPPRLKEMKSQESAAGSK) is disordered. Residues 20–247 (SRGKPAPAEG…MEAEELYQKR (228 aa)) are Extracellular-facing. The 92-residue stretch at 37-128 (PRLKEMKSQE…GNDSASANIT (92 aa)) folds into the Ig-like C2-type domain. Cysteines 57 and 112 form a disulfide. Positions 139-164 (MSASTERPYVSSESPIRISVSTEGAN) are enriched in polar residues. The interval 139 to 175 (MSASTERPYVSSESPIRISVSTEGANTSSSTSTSTTG) is disordered. The span at 165–175 (TSSSTSTSTTG) shows a compositional bias: low complexity. The EGF-like domain maps to 178–222 (HLIKCAEKEKTFCVNGGECFMVKDLSNPSRYLCKCPNEFTGDRCQ). Intrachain disulfides connect Cys-182–Cys-196, Cys-190–Cys-210, and Cys-212–Cys-221. A helical membrane pass occupies residues 248–268 (VLTITGICIALLVVGIMCVVA). Over 269–645 (YCKTKKQRQK…VIANQDPIAV (377 aa)) the chain is Cytoplasmic. Residues 340–355 (SHYTSTAHHSTTVTQT) are compositionally biased toward low complexity. 4 disordered regions span residues 340–364 (SHYTSTAHHSTTVTQTPSHSWSNGH), 380–406 (SVENSRHSSPAGGPRGRLHGLGGPREC), 433–463 (MTTPARMSPVDFHTPSSPKSPPSEMSPPVSS), and 531–593 (ETTQ…DTPF). Over residues 392–402 (GPRGRLHGLGG) the composition is skewed to gly residues. The segment covering 547 to 557 (TNSRRAKRTKP) has biased composition (basic residues). Residues 568-579 (DSNPSSVSSNSE) are compositionally biased toward low complexity.

Belongs to the neuregulin family. In terms of assembly, the cytoplasmic domain interacts with the LIM domain region of LIMK1. Forms a ternary complex with ERBB3 and ITGAV:ITGB3 or ITGA6:ITGB4. Interacts with NRDC and BACE1. In terms of processing, proteolytic cleavage close to the plasma membrane on the external face leads to the release of the soluble growth factor form. Post-translationally, N- and O-glycosylated. Extensive glycosylation precedes the proteolytic cleavage.

It is found in the cell membrane. The protein resides in the secreted. Its function is as follows. Direct ligand for ERBB3 and ERBB4 tyrosine kinase receptors. Concomitantly recruits ERBB1 and ERBB2 coreceptors, resulting in ligand-stimulated tyrosine phosphorylation and activation of the ERBB receptors. Perform diverse functions such as inducing growth and differentiation of epithelial, glial, neuronal, and skeletal muscle cells; inducing expression of acetylcholine receptor in synaptic vesicles during the formation of the neuromuscular junction; stimulating lobuloalveolar budding and milk production in the mammary gland and inducing differentiation of mammary tumor cells; stimulating Schwann cell proliferation; implication in the development of the myocardium such as trabeculation of the developing heart. Binds to ERBB4 and ERBB3. Acts as a ligand for integrins and binds (via EGF domain) to integrins ITGAV:ITGB3 or ITGA6:ITGB4. Its binding to integrins and subsequent ternary complex formation with integrins and ERRB3 are essential for NRG1-ERBB signaling. Induces the phosphorylation and activation of MAPK3/ERK1, MAPK1/ERK2 and AKT1, and ligand-dependent ERBB4 endocytosis is essential for the NRG1-mediated activation of these kinases in neurons. The sequence is that of Pro-neuregulin-1, membrane-bound isoform from Mus musculus (Mouse).